We begin with the raw amino-acid sequence, 279 residues long: tRNA (guanine-N(1)-)-methyltransferase (279 aa).

S-adenosyl-L-methionine is bound by residues Gly-117 and 141–146 (LGDYVL). A disordered region spans residues 256-279 (WTPDGSGFRAGGDPVADSSDTNEP).

This sequence belongs to the RNA methyltransferase TrmD family. In terms of assembly, homodimer.

It localises to the cytoplasm. It carries out the reaction guanosine(37) in tRNA + S-adenosyl-L-methionine = N(1)-methylguanosine(37) in tRNA + S-adenosyl-L-homocysteine + H(+). Specifically methylates guanosine-37 in various tRNAs. The sequence is that of tRNA (guanine-N(1)-)-methyltransferase from Kineococcus radiotolerans (strain ATCC BAA-149 / DSM 14245 / SRS30216).